We begin with the raw amino-acid sequence, 288 residues long: GCN5-related N-acetyltransferase 6, chloroplastic (288 aa).

The transit peptide at Met-1–Glu-111 directs the protein to the chloroplast. The N-acetyltransferase domain maps to Ser-151–Ser-288. Residues Leu-215–Val-217, Arg-223–Cys-228, Asn-254–Val-256, and Tyr-261 contribute to the acetyl-CoA site. Tyr-261 functions as the Proton donor in the catalytic mechanism.

Belongs to the acetyltransferase family. GNAT subfamily. As to quaternary structure, oligomer. Autoacetylated. As to expression, expressed in green tissues and in roots.

It localises to the plastid. The protein localises to the chloroplast. It is found in the cytoplasm. Its subcellular location is the perinuclear region. The catalysed reaction is an N-terminal L-alpha-aminoacyl-[protein] + acetyl-CoA = N-terminal N(alpha)-acetyl-L-alpha-aminoacyl-[protein] + CoA + H(+). It catalyses the reaction L-lysyl-[protein] + acetyl-CoA = N(6)-acetyl-L-lysyl-[protein] + CoA + H(+). The enzyme catalyses N-terminal L-alanyl-[protein] + acetyl-CoA = N-terminal N(alpha)-acetyl-L-alanyl-[protein] + CoA + H(+). It carries out the reaction N-terminal L-seryl-[protein] + acetyl-CoA = N-terminal N(alpha)-acetyl-L-seryl-[protein] + CoA + H(+). The catalysed reaction is N-terminal L-threonyl-[protein] + acetyl-CoA = N-terminal N(alpha)-acetyl-L-threonyl-[protein] + CoA + H(+). It catalyses the reaction N-terminal L-methionyl-[protein] + acetyl-CoA = N-terminal N(alpha)-acetyl-L-methionyl-[protein] + CoA + H(+). The enzyme catalyses N-terminal L-valyl-[protein] + acetyl-CoA = N-terminal N(alpha)-acetyl-L-valyl-[protein] + CoA + H(+). In terms of biological role, protein acetyltransferase with dual specificity triggering both N-alpha-acetylation (NTA), with a large spectrum of modified N-termini, including methionine, alanine, serine, threonine and to a lower extent valine as substrates, and epsilon-lysine acetylation (KA). This Arabidopsis thaliana (Mouse-ear cress) protein is GCN5-related N-acetyltransferase 6, chloroplastic.